Consider the following 214-residue polypeptide: Adenylate kinase (214 aa).

An ATP-binding site is contributed by 10–15; it reads GAGKGT. Residues 30-59 form an NMP region; the sequence is STGDMLRAAVKAGTPLGLEAKKVMDAGQLV. Residues threonine 31, arginine 36, 57–59, 85–88, and glutamine 92 contribute to the AMP site; these read QLV and GFPR. The segment at 122 to 159 is LID; it reads GRRVHPGSGRVYHVVFNPPKVEGKDDVTGEDLAIRPDD. ATP is bound by residues arginine 123 and 132–133; that span reads VY. 2 residues coordinate AMP: arginine 156 and arginine 167. An ATP-binding site is contributed by glutamine 200.

Belongs to the adenylate kinase family. Monomer.

It is found in the cytoplasm. It carries out the reaction AMP + ATP = 2 ADP. The protein operates within purine metabolism; AMP biosynthesis via salvage pathway; AMP from ADP: step 1/1. Catalyzes the reversible transfer of the terminal phosphate group between ATP and AMP. Plays an important role in cellular energy homeostasis and in adenine nucleotide metabolism. The polypeptide is Adenylate kinase (Shewanella sp. (strain ANA-3)).